Here is a 296-residue protein sequence, read N- to C-terminus: Large ribosomal subunit protein uL18A (296 aa).

The tract at residues 251–296 is disordered; it reads PVHEKKPKKEVKKKRWNRAKLSLEQKKDRVAQKKASFLRAQEKADS. Residues 255 to 268 are compositionally biased toward basic residues; the sequence is KKPKKEVKKKRWNR. A compositionally biased stretch (basic and acidic residues) spans 271–281; it reads LSLEQKKDRVA.

Belongs to the universal ribosomal protein uL18 family. As to quaternary structure, component of the large ribosomal subunit (LSU). Part of a LSU subcomplex, the 5S RNP which is composed of the 5S RNA, RPL5 and RPL11.

Its subcellular location is the cytoplasm. It is found in the nucleus. The protein localises to the nucleolus. Functionally, component of the ribosome, a large ribonucleoprotein complex responsible for the synthesis of proteins in the cell. The small ribosomal subunit (SSU) binds messenger RNAs (mRNAs) and translates the encoded message by selecting cognate aminoacyl-transfer RNA (tRNA) molecules. The large subunit (LSU) contains the ribosomal catalytic site termed the peptidyl transferase center (PTC), which catalyzes the formation of peptide bonds, thereby polymerizing the amino acids delivered by tRNAs into a polypeptide chain. The nascent polypeptides leave the ribosome through a tunnel in the LSU and interact with protein factors that function in enzymatic processing, targeting, and the membrane insertion of nascent chains at the exit of the ribosomal tunnel. As part of the 5S RNP/5S ribonucleoprotein particle it is an essential component of the LSU, required for its formation and the maturation of rRNAs. It also couples ribosome biogenesis to p53/TP53 activation. As part of the 5S RNP it accumulates in the nucleoplasm and inhibits MDM2, when ribosome biogenesis is perturbed, mediating the stabilization and the activation of TP53. This is Large ribosomal subunit protein uL18A (rpl5-a) from Xenopus laevis (African clawed frog).